The chain runs to 171 residues: Co-chaperone protein HscB homolog (171 aa).

One can recognise a J domain in the interval 2–74 (NHFELFRLPF…ISRAEYMLSE (73 aa)).

It belongs to the HscB family. In terms of assembly, interacts with HscA and stimulates its ATPase activity.

In terms of biological role, co-chaperone involved in the maturation of iron-sulfur cluster-containing proteins. Seems to help targeting proteins to be folded toward HscA. The sequence is that of Co-chaperone protein HscB homolog from Photobacterium profundum (strain SS9).